The chain runs to 2278 residues: Protein Ycf2 (2278 aa).

1632-1639 (GSIGTGRS) is a binding site for ATP.

Belongs to the Ycf2 family.

Its subcellular location is the plastid. The protein resides in the chloroplast stroma. In terms of biological role, probable ATPase of unknown function. Its presence in a non-photosynthetic plant (Epifagus virginiana) and experiments in tobacco indicate that it has an essential function which is probably not related to photosynthesis. This is Protein Ycf2 from Solanum tuberosum (Potato).